The sequence spans 283 residues: Thymidylate synthase (283 aa).

R22 is a binding site for dUMP. C160 acts as the Nucleophile in catalysis. DUMP contacts are provided by residues 180–183, N191, and 221–223; these read RSCD and HIY. Position 183 (D183) interacts with (6R)-5,10-methylene-5,6,7,8-tetrahydrofolate. Position 282 (A282) interacts with (6R)-5,10-methylene-5,6,7,8-tetrahydrofolate.

The protein belongs to the thymidylate synthase family. Bacterial-type ThyA subfamily. Homodimer.

The protein resides in the cytoplasm. The enzyme catalyses dUMP + (6R)-5,10-methylene-5,6,7,8-tetrahydrofolate = 7,8-dihydrofolate + dTMP. It functions in the pathway pyrimidine metabolism; dTTP biosynthesis. Functionally, catalyzes the reductive methylation of 2'-deoxyuridine-5'-monophosphate (dUMP) to 2'-deoxythymidine-5'-monophosphate (dTMP) while utilizing 5,10-methylenetetrahydrofolate (mTHF) as the methyl donor and reductant in the reaction, yielding dihydrofolate (DHF) as a by-product. This enzymatic reaction provides an intracellular de novo source of dTMP, an essential precursor for DNA biosynthesis. In Shewanella frigidimarina (strain NCIMB 400), this protein is Thymidylate synthase.